The sequence spans 325 residues: Probable cell division protein WhiA (325 aa).

Residues 273 to 306 (SLEELGALADPPLTKDAVAGRIRRLLALADKRAN) constitute a DNA-binding region (H-T-H motif).

It belongs to the WhiA family.

Its function is as follows. Involved in cell division and chromosome segregation. The protein is Probable cell division protein WhiA of Frankia alni (strain DSM 45986 / CECT 9034 / ACN14a).